Consider the following 427-residue polypeptide: UBX domain-containing protein 2 (427 aa).

Disordered regions lie at residues 115-143 and 273-331; these read FDQSPSQIPFPSSNTEDSSEESDSSSRAS and ETSG…GVAD. The segment covering 311 to 326 has biased composition (low complexity); the sequence is STTESQGESSSQQAES. The UBX domain maps to 349-425; that stretch reads PGPNVTRIQI…GIQNTALQFE (77 aa). Position 371 is a phosphoserine (Ser-371).

Interacts with cdc48.

Involved in CDC48-dependent protein degradation through the ubiquitin/proteasome pathway. The protein is UBX domain-containing protein 2 (ubx2) of Schizosaccharomyces pombe (strain 972 / ATCC 24843) (Fission yeast).